Reading from the N-terminus, the 210-residue chain is TBC1 domain family member 28 (210 aa).

One can recognise a Rab-GAP TBC domain in the interval 101 to 210 (VIPLAVRGRA…WVSLGGVATS (110 aa)).

This is TBC1 domain family member 28 (TBC1D28) from Homo sapiens (Human).